The sequence spans 207 residues: LexA repressor (207 aa).

A DNA-binding region (H-T-H motif) is located at residues 28 to 48; it reads RAEISRELGFKSANAAEEHLK. Residues Ser-123 and Lys-160 each act as for autocatalytic cleavage activity in the active site.

It belongs to the peptidase S24 family. As to quaternary structure, homodimer.

The catalysed reaction is Hydrolysis of Ala-|-Gly bond in repressor LexA.. Its function is as follows. Represses a number of genes involved in the response to DNA damage (SOS response), including recA and lexA. In the presence of single-stranded DNA, RecA interacts with LexA causing an autocatalytic cleavage which disrupts the DNA-binding part of LexA, leading to derepression of the SOS regulon and eventually DNA repair. The protein is LexA repressor of Haemophilus influenzae (strain 86-028NP).